The following is a 63-amino-acid chain: Large ribosomal subunit protein uL29 (63 aa).

The protein belongs to the universal ribosomal protein uL29 family.

This is Large ribosomal subunit protein uL29 from Bordetella pertussis (strain Tohama I / ATCC BAA-589 / NCTC 13251).